The chain runs to 715 residues: Polyribonucleotide nucleotidyltransferase (715 aa).

Mg(2+) is bound by residues Asp-489 and Asp-495. Residues 556–615 (PRIETLRIPTEKIREVIGTGGKVIREICEKTGAKINIEDDGTVKVASSDGNSIKAAINWI) enclose the KH domain. Residues 625-693 (GHIYDGTVVK…DRGKVRLSMR (69 aa)) form the S1 motif domain.

The protein belongs to the polyribonucleotide nucleotidyltransferase family. It depends on Mg(2+) as a cofactor.

It is found in the cytoplasm. The enzyme catalyses RNA(n+1) + phosphate = RNA(n) + a ribonucleoside 5'-diphosphate. Functionally, involved in mRNA degradation. Catalyzes the phosphorolysis of single-stranded polyribonucleotides processively in the 3'- to 5'-direction. In Beijerinckia indica subsp. indica (strain ATCC 9039 / DSM 1715 / NCIMB 8712), this protein is Polyribonucleotide nucleotidyltransferase.